The following is a 103-amino-acid chain: Urease subunit beta (103 aa).

Belongs to the urease beta subunit family. As to quaternary structure, heterotrimer of UreA (gamma), UreB (beta) and UreC (alpha) subunits. Three heterotrimers associate to form the active enzyme.

It is found in the cytoplasm. It catalyses the reaction urea + 2 H2O + H(+) = hydrogencarbonate + 2 NH4(+). It functions in the pathway nitrogen metabolism; urea degradation; CO(2) and NH(3) from urea (urease route): step 1/1. This is Urease subunit beta from Streptomyces coelicolor (strain ATCC BAA-471 / A3(2) / M145).